The sequence spans 165 residues: uncharacterized protein (165 aa).

This is an uncharacterized protein from Invertebrate iridescent virus 6 (IIV-6).